A 405-amino-acid polypeptide reads, in one-letter code: Dynactin subunit 2 (405 aa).

The interval 1-24 is disordered; the sequence is MADPKYANLPGIASNEPDVYETSD. Coiled coils occupy residues 102-125 and 379-405; these read QQKY…IQTS and QQTM…KLNK.

It belongs to the dynactin subunit 2 family. In terms of assembly, subunit of dynactin, a multiprotein complex part of a tripartite complex with dynein and a adapter, such as BICDL1, BICD2 or HOOK3. The dynactin complex is built around ACTR1A/ACTB filament and consists of an actin-related filament composed of a shoulder domain, a pointed end and a barbed end. Its length is defined by its flexible shoulder domain. The soulder is composed of 2 DCTN1 subunits, 4 DCTN2 and 2 DCTN3.

It localises to the cytoplasm. The protein localises to the cytoskeleton. It is found in the microtubule organizing center. The protein resides in the centrosome. Its subcellular location is the membrane. Its function is as follows. Part of the dynactin complex that activates the molecular motor dynein for ultra-processive transport along microtubules. In the dynactin soulder domain, binds the ACTR1A filament and acts as a molecular ruler to determine the length. Modulates cytoplasmic dynein binding to an organelle, and plays a role in prometaphase chromosome alignment and spindle organization during mitosis. Involved in anchoring microtubules to centrosomes. This Danio rerio (Zebrafish) protein is Dynactin subunit 2 (dctn2).